The sequence spans 99 residues: Class II hydrophobin B (99 aa).

An N-terminal signal peptide occupies residues 1-15 (MKFFAIAALFAGALA). 2 disulfides stabilise this stretch: Cys30-Cys79 and Cys40-Cys70.

The protein belongs to the cerato-ulmin hydrophobin family.

The protein resides in the secreted. The protein localises to the cell wall. It is found in the vacuole. Its subcellular location is the cytoplasmic vesicle. Aerial growth, conidiation, and dispersal of filamentous fungi in the environment rely upon a capability of their secreting small amphipathic proteins called hydrophobins (HPBs) with low sequence identity. Class I can self-assemble into an outermost layer of rodlet bundles on aerial cell surfaces, conferring cellular hydrophobicity that supports fungal growth, development and dispersal; whereas Class II form highly ordered films at water-air interfaces through intermolecular interactions but contribute nothing to the rodlet structure. Hyd2B contributes to certain cell wall-related features, such as hydrophobicity but is not involved in cell wall-related events during fungal proliferation in host hemocoel. Does not contribute to conidial hydrophobicity. Involved in insect hemocoel colonization independent of cell hydrophobicity. In Beauveria bassiana (strain ARSEF 2860) (White muscardine disease fungus), this protein is Class II hydrophobin B.